A 726-amino-acid polypeptide reads, in one-letter code: 1,4-alpha-glucan branching enzyme GlgB (726 aa).

The active-site Nucleophile is the D407. Catalysis depends on E460, which acts as the Proton donor.

The protein belongs to the glycosyl hydrolase 13 family. GlgB subfamily. Monomer.

The enzyme catalyses Transfers a segment of a (1-&gt;4)-alpha-D-glucan chain to a primary hydroxy group in a similar glucan chain.. It functions in the pathway glycan biosynthesis; glycogen biosynthesis. Functionally, catalyzes the formation of the alpha-1,6-glucosidic linkages in glycogen by scission of a 1,4-alpha-linked oligosaccharide from growing alpha-1,4-glucan chains and the subsequent attachment of the oligosaccharide to the alpha-1,6 position. This chain is 1,4-alpha-glucan branching enzyme GlgB, found in Hydrogenovibrio crunogenus (strain DSM 25203 / XCL-2) (Thiomicrospira crunogena).